A 307-amino-acid polypeptide reads, in one-letter code: Protein TIPIN homolog (307 aa).

Disordered regions lie at residues 1–50 (MASL…SQDA) and 252–279 (ASMD…LSNE). Residues 262–271 (PLPPSQPPTP) are compositionally biased toward pro residues.

It belongs to the CSM3 family.

The protein resides in the cytoplasm. The protein localises to the nucleus. In terms of biological role, required for normal progression of S-phase. Important for cell survival after DNA damage or replication stress. The polypeptide is Protein TIPIN homolog (Drosophila melanogaster (Fruit fly)).